We begin with the raw amino-acid sequence, 91 residues long: Small ribosomal subunit protein uS19 (91 aa).

The protein belongs to the universal ribosomal protein uS19 family.

Functionally, protein S19 forms a complex with S13 that binds strongly to the 16S ribosomal RNA. The sequence is that of Small ribosomal subunit protein uS19 from Lachnospira eligens (strain ATCC 27750 / DSM 3376 / VPI C15-48 / C15-B4) (Eubacterium eligens).